The following is a 295-amino-acid chain: Sulfotransferase 1A1 (295 aa).

3'-phosphoadenylyl sulfate is bound at residue 48-53; sequence KSGTTW. 106-108 contacts substrate; the sequence is KTH. Residue H108 is the Proton acceptor of the active site. Residues R130, S138, Y193, 227–232, and 255–259 each bind 3'-phosphoadenylyl sulfate; these read TSFKEM and FMRKG. S138 carries the post-translational modification Phosphoserine.

It belongs to the sulfotransferase 1 family. Homodimer. Liver, lung, adrenal, brain, platelets and skin.

Its subcellular location is the cytoplasm. The enzyme catalyses a phenol + 3'-phosphoadenylyl sulfate = an aryl sulfate + adenosine 3',5'-bisphosphate + H(+). The catalysed reaction is 17beta-estradiol + 3'-phosphoadenylyl sulfate = 17beta-estradiol 3-sulfate + adenosine 3',5'-bisphosphate + H(+). It carries out the reaction 4-ethylphenol + 3'-phosphoadenylyl sulfate = 4-ethylphenyl sulfate + adenosine 3',5'-bisphosphate + H(+). It catalyses the reaction 4-nitrophenol + 3'-phosphoadenylyl sulfate = 4-nitrophenyl sulfate + adenosine 3',5'-bisphosphate. The enzyme catalyses dopamine + 3'-phosphoadenylyl sulfate = dopamine 3-O-sulfate + adenosine 3',5'-bisphosphate + H(+). The catalysed reaction is dopamine + 3'-phosphoadenylyl sulfate = dopamine 4-O-sulfate + adenosine 3',5'-bisphosphate + H(+). It carries out the reaction 3,3',5-triiodo-L-thyronine + 3'-phosphoadenylyl sulfate = 3,3',5-triiodo-L-thyronine sulfate + adenosine 3',5'-bisphosphate + H(+). It catalyses the reaction 3,3',5'-triiodo-L-thyronine + 3'-phosphoadenylyl sulfate = 3,3',5'-triiodo-L-thyronine sulfate + adenosine 3',5'-bisphosphate + H(+). The enzyme catalyses 3,3'-diiodo-L-thyronine + 3'-phosphoadenylyl sulfate = 3,3'-diiodo-L-thyronine sulfate + adenosine 3',5'-bisphosphate + H(+). The catalysed reaction is L-thyroxine + 3'-phosphoadenylyl sulfate = L-thyroxine sulfate + adenosine 3',5'-bisphosphate + H(+). Sulfotransferase that utilizes 3'-phospho-5'-adenylyl sulfate (PAPS) as sulfonate donor to catalyze the sulfate conjugation of a wide variety of acceptor molecules bearing a hydroxyl or an amine group. Sulfonation increases the water solubility of most compounds, and therefore their renal excretion, but it can also result in bioactivation to form active metabolites. Displays broad substrate specificity for small phenolic compounds. Plays an important role in the sulfonation of endogenous molecules such as steroid hormones. Mediates the sulfate conjugation of a variety of xenobiotics, including the drugs acetaminophen and minoxidil. Mediates also the metabolic activation of carcinogenic N-hydroxyarylamines leading to highly reactive intermediates capable of forming DNA adducts, potentially resulting in mutagenesis. May play a role in gut microbiota-host metabolic interaction. O-sulfonates 4-ethylphenol (4-EP), a dietary tyrosine-derived metabolite produced by gut bacteria. The product 4-EPS crosses the blood-brain barrier and may negatively regulate oligodendrocyte maturation and myelination, affecting the functional connectivity of different brain regions associated with the limbic system. Catalyzes the sulfate conjugation of dopamine. Catalyzes the sulfation of T4 (L-thyroxine/3,5,3',5'-tetraiodothyronine), T3 (3,5,3'-triiodothyronine), rT3 (3,3',5'-triiodothyronine) and 3,3'-T2 (3,3'-diiodothyronine), with a substrate preference of 3,3'-T2 &gt; rT3 &gt; T3 &gt; T4. The polypeptide is Sulfotransferase 1A1 (SULT1A1) (Homo sapiens (Human)).